Consider the following 101-residue polypeptide: NADH-quinone oxidoreductase subunit K (101 aa).

Transmembrane regions (helical) follow at residues 4 to 24 (LGYF…GIII), 30 to 50 (IVLL…FIAF), and 61 to 81 (IFVF…LAIL).

Belongs to the complex I subunit 4L family. As to quaternary structure, NDH-1 is composed of 14 different subunits. Subunits NuoA, H, J, K, L, M, N constitute the membrane sector of the complex.

The protein localises to the cell inner membrane. The enzyme catalyses a quinone + NADH + 5 H(+)(in) = a quinol + NAD(+) + 4 H(+)(out). Its function is as follows. NDH-1 shuttles electrons from NADH, via FMN and iron-sulfur (Fe-S) centers, to quinones in the respiratory chain. The immediate electron acceptor for the enzyme in this species is believed to be ubiquinone. Couples the redox reaction to proton translocation (for every two electrons transferred, four hydrogen ions are translocated across the cytoplasmic membrane), and thus conserves the redox energy in a proton gradient. This is NADH-quinone oxidoreductase subunit K from Coxiella burnetii (strain CbuG_Q212) (Coxiella burnetii (strain Q212)).